The following is a 200-amino-acid chain: Holliday junction branch migration complex subunit RuvA (200 aa).

Positions 1–63 (MIASVRGEVL…EDSMTLYGFP (63 aa)) are domain I. The domain II stretch occupies residues 64-142 (DSESKELFGL…AVASTSGAVP (79 aa)). The flexible linker stretch occupies residues 142-146 (PLGAG). Residues 147 to 200 (GGGSVRDQIVEALVGLGFPAKQAEQAADSVLAEAPESTTSTALRSALSLLGKTR) are domain III.

Belongs to the RuvA family. As to quaternary structure, homotetramer. Forms an RuvA(8)-RuvB(12)-Holliday junction (HJ) complex. HJ DNA is sandwiched between 2 RuvA tetramers; dsDNA enters through RuvA and exits via RuvB. An RuvB hexamer assembles on each DNA strand where it exits the tetramer. Each RuvB hexamer is contacted by two RuvA subunits (via domain III) on 2 adjacent RuvB subunits; this complex drives branch migration. In the full resolvosome a probable DNA-RuvA(4)-RuvB(12)-RuvC(2) complex forms which resolves the HJ.

The protein localises to the cytoplasm. Functionally, the RuvA-RuvB-RuvC complex processes Holliday junction (HJ) DNA during genetic recombination and DNA repair, while the RuvA-RuvB complex plays an important role in the rescue of blocked DNA replication forks via replication fork reversal (RFR). RuvA specifically binds to HJ cruciform DNA, conferring on it an open structure. The RuvB hexamer acts as an ATP-dependent pump, pulling dsDNA into and through the RuvAB complex. HJ branch migration allows RuvC to scan DNA until it finds its consensus sequence, where it cleaves and resolves the cruciform DNA. In Rhodococcus jostii (strain RHA1), this protein is Holliday junction branch migration complex subunit RuvA.